Consider the following 317-residue polypeptide: Apolipoprotein E (317 aa).

A signal peptide spans 1 to 18 (MKVLWVALVITLLAGCQA). 8 repeat units span residues 80–101 (VLMDETMKEVKAYREELEEQLG), 102–123 (PVAQETQARVSKELQAAQARLA), 124–145 (SDMQDVRGRLAQYRSEVQAMMG), 146–167 (HTTDELRDRLASHLRKLRKRLL), 168–189 (RDAEDLQKRLAVYRAGALEGSE), 190–211 (RSVSAIRERLGPLVEQGRARAA), 212–233 (TVGTLASQTLRERAEAWHQKLR), and 234–255 (GRVEEMGTQARDHLEEMREQLD). An 8 X 22 AA approximate tandem repeats region spans residues 80 to 255 (VLMDETMKEV…HLEEMREQLD (176 aa)). Residue Met-143 is modified to Methionine sulfoxide. Residues 158–168 (HLRKLRKRLLR) are LDL and other lipoprotein receptors binding. 162 to 165 (LRKR) is a binding site for heparin. Residues 210 to 290 (AATVGTLASQ…SWFEPLVEDM (81 aa)) are lipid-binding and lipoprotein association. 229-236 (HQKLRGRV) serves as a coordination point for heparin. The interval 266–317 (TQMRLQAEAFQARLKSWFEPLVEDMQRQWAGLVEKVQLAMATSSTSAPSENH) is homooligomerization. The specificity for association with VLDL stretch occupies residues 278 to 290 (RLKSWFEPLVEDM).

Belongs to the apolipoprotein A1/A4/E family. Homotetramer. May interact with ABCA1; functionally associated with ABCA1 in the biogenesis of HDLs. May interact with APP/A4 amyloid-beta peptide; the interaction is extremely stable in vitro but its physiological significance is unclear. May interact with MAPT. May interact with MAP2. In the cerebrospinal fluid, interacts with secreted SORL1. Interacts with PMEL; this allows the loading of PMEL luminal fragment on ILVs to induce fibril nucleation. Post-translationally, APOE exists as multiple glycosylated and sialylated glycoforms within cells and in plasma. The extent of glycosylation and sialylation are tissue and context specific. In terms of processing, glycated in plasma VLDL. Phosphorylated by FAM20C in the extracellular medium.

It is found in the secreted. Its subcellular location is the extracellular space. It localises to the extracellular matrix. The protein resides in the extracellular vesicle. The protein localises to the endosome. It is found in the multivesicular body. Its function is as follows. APOE is an apolipoprotein, a protein associating with lipid particles, that mainly functions in lipoprotein-mediated lipid transport between organs via the plasma and interstitial fluids. APOE is a core component of plasma lipoproteins and is involved in their production, conversion and clearance. Apolipoproteins are amphipathic molecules that interact both with lipids of the lipoprotein particle core and the aqueous environment of the plasma. As such, APOE associates with chylomicrons, chylomicron remnants, very low density lipoproteins (VLDL) and intermediate density lipoproteins (IDL) but shows a preferential binding to high-density lipoproteins (HDL). It also binds a wide range of cellular receptors including the LDL receptor/LDLR and the very low-density lipoprotein receptor/VLDLR that mediate the cellular uptake of the APOE-containing lipoprotein particles. Finally, APOE also has a heparin-binding activity and binds heparan-sulfate proteoglycans on the surface of cells, a property that supports the capture and the receptor-mediated uptake of APOE-containing lipoproteins by cells. This Physeter macrocephalus (Sperm whale) protein is Apolipoprotein E (APOE).